The chain runs to 228 residues: Ankyrin repeat domain-containing protein 46 (228 aa).

4 ANK repeats span residues 11-40 (QTSVPLLQACIDGDLSFARRLLETGCDPNI), 44-73 (RGRTGLHLAAARGNVDICRFLHKFGADLLA), 77-103 (QGNTALHLCGHVDTIQFLVSNGLKIDI), and 107-138 (NGSTPLVLAKRRGVNKDAIRLLEGLEEQEVKG). The helical transmembrane segment at 195–215 (VLLLLVVIALLSLGIAYYVSG) threads the bilayer.

It localises to the membrane. This Danio rerio (Zebrafish) protein is Ankyrin repeat domain-containing protein 46 (ankrd46).